The chain runs to 326 residues: Nicotianamine synthase 2 (326 aa).

It belongs to the nicotianamine synthase (NAS)-like family. As to expression, expressed in roots.

The catalysed reaction is 3 S-adenosyl-L-methionine = nicotianamine + 3 S-methyl-5'-thioadenosine + 3 H(+). Functionally, synthesizes nicotianamine, a polyamine that is the first intermediate in the synthesis of the phytosiderophores of the mugineic acid type found in gramineae which serve as a sensor for the physiological iron status within the plant, and/or might be involved in the transport of iron. The protein is Nicotianamine synthase 2 (NAS2) of Oryza sativa subsp. indica (Rice).